The chain runs to 691 residues: DNA ligase (691 aa).

Residues Asp-41–Asp-45, Ser-90–Leu-91, and Glu-130 each bind NAD(+). Lys-132 functions as the N6-AMP-lysine intermediate in the catalytic mechanism. Positions 153, 190, 307, and 331 each coordinate NAD(+). 4 residues coordinate Zn(2+): Cys-425, Cys-428, Cys-443, and Cys-449. In terms of domain architecture, BRCT spans Ala-610–Arg-691.

Belongs to the NAD-dependent DNA ligase family. LigA subfamily. Requires Mg(2+) as cofactor. The cofactor is Mn(2+).

It carries out the reaction NAD(+) + (deoxyribonucleotide)n-3'-hydroxyl + 5'-phospho-(deoxyribonucleotide)m = (deoxyribonucleotide)n+m + AMP + beta-nicotinamide D-nucleotide.. DNA ligase that catalyzes the formation of phosphodiester linkages between 5'-phosphoryl and 3'-hydroxyl groups in double-stranded DNA using NAD as a coenzyme and as the energy source for the reaction. It is essential for DNA replication and repair of damaged DNA. This Burkholderia multivorans (strain ATCC 17616 / 249) protein is DNA ligase.